Here is a 150-residue protein sequence, read N- to C-terminus: Large ribosomal subunit protein bL9 (150 aa).

The protein belongs to the bacterial ribosomal protein bL9 family.

Functionally, binds to the 23S rRNA. The polypeptide is Large ribosomal subunit protein bL9 (Alkalilimnicola ehrlichii (strain ATCC BAA-1101 / DSM 17681 / MLHE-1)).